The following is a 124-amino-acid chain: Secretion system apparatus protein SsaP (124 aa).

The protein is Secretion system apparatus protein SsaP (ssaP) of Salmonella typhi.